A 141-amino-acid polypeptide reads, in one-letter code: Large ribosomal subunit protein uL11 (141 aa).

It belongs to the universal ribosomal protein uL11 family. Part of the ribosomal stalk of the 50S ribosomal subunit. Interacts with L10 and the large rRNA to form the base of the stalk. L10 forms an elongated spine to which L12 dimers bind in a sequential fashion forming a multimeric L10(L12)X complex. Post-translationally, one or more lysine residues are methylated.

Forms part of the ribosomal stalk which helps the ribosome interact with GTP-bound translation factors. This chain is Large ribosomal subunit protein uL11, found in Lactococcus lactis subsp. cremoris (strain MG1363).